The chain runs to 586 residues: Kinesin-like protein KIF25 (586 aa).

Residues 10-94 adopt a coiled-coil conformation; sequence SFWEQRTRQL…VIQKLNQDIQ (85 aa). Residues 173 to 565 enclose the Kinesin motor domain; it reads NIRVHCRIRP…LGFGIRARQV (393 aa). 267 to 274 lines the ATP pocket; the sequence is GQTGSGKS. Disordered regions lie at residues 417–460 and 564–586; these read TADQ…AGRA and QVQRGPARKRPPSSQMEGKRRPD.

It belongs to the TRAFAC class myosin-kinesin ATPase superfamily. Kinesin family. Homotetramer.

The protein localises to the cytoplasm. Its subcellular location is the cytoskeleton. It localises to the microtubule organizing center. It is found in the centrosome. Its function is as follows. Minus-end microtubule-dependent motor protein. Acts as a negative regulator of centrosome separation required to prevent premature centrosome separation during interphase. Required to maintain a centered nucleus to ensure that the spindle is stably oriented at the onset of mitosis. May also act as a negative regulator of amino acid starvation-induced autophagy. The sequence is that of Kinesin-like protein KIF25 from Macaca fascicularis (Crab-eating macaque).